The sequence spans 391 residues: F-box only protein 5 (391 aa).

An F-box domain is found at 198-245; that stretch reads AELFHRDFKHLLTKILRHLSAMDLINVISVSTTWRKILQKDNSAYNSY. The segment at 318 to 366 adopts a ZBR-type zinc-finger fold; that stretch reads CLKVCVDCSSPAKYDPYLHRATCTRESCKFDFCTLCSCKYHGSKCCQTS. Positions 322, 325, 340, 345, 350, 353, 358, and 363 each coordinate Zn(2+). The segment at 365 to 391 is disordered; sequence TSKPRSYRVPSEPLPGSKKSKQNLRRL. The span at 382 to 391 shows a compositional bias: basic residues; sequence KKSKQNLRRL.

Part of a SCF (SKP1-cullin-F-box) protein ligase complex. Interacts with btrc. Interacts with skp1. Interacts with cdc20. Interacts with pin1; stabilizes fbxo5 by preventing its association with btrc in an isomerization-dependent pathway; this interaction is present during G2 phase and prevents fbxo5 degradation. Interacts with plk1. Post-translationally, proteolysed; proteolysis is induced by both cyclin B-cdk1 and cyclin A-cdk1/2 complex through probable phosphorylation. Proteolysis is inhibited by pin1 during G2.

It is found in the nucleus. Its subcellular location is the cytoplasm. The protein localises to the cytoskeleton. The protein resides in the spindle. It localises to the microtubule organizing center. It is found in the centrosome. The protein operates within protein modification; protein ubiquitination. Regulates progression through early mitosis by inhibiting the anaphase promoting complex/cyclosome (APC). Binds to the APC activators cdc20 to prevent APC activation. Can also bind directly to the APC to inhibit substrate-binding. Required to arrest unfertilized eggs at metaphase of meiosis II, by preventing their release from metaphase of meiosis II, through inhibition of APC-dependent cyclin B destruction leading to stabilization of cyclin B-cdk1 complex activity. In Xenopus tropicalis (Western clawed frog), this protein is F-box only protein 5.